The chain runs to 315 residues: NAD-dependent protein lipoamidase sirtuin-4, mitochondrial (315 aa).

Residues 1 to 29 (MRMSFGLTFKRTAKVHWRANFSQQCSLRS) constitute a mitochondrion transit peptide. The region spanning 38–315 (PPLDPEKVKE…GELLPLIDPR (278 aa)) is the Deacetylase sirtuin-type domain. Residues 63-83 (GAGI…VGLY) and 144-147 (QNVD) contribute to the NAD(+) site. The active-site Proton acceptor is histidine 162. Zn(2+) is bound by residues cysteine 170, cysteine 173, cysteine 221, and cysteine 224. Residues 261 to 263 (GSS), 287 to 289 (NIG), and cysteine 305 each bind NAD(+).

This sequence belongs to the sirtuin family. Class II subfamily. In terms of assembly, interacts with GLUD1, IDE and SLC25A5. Interacts with DLAT and PDHX. Interacts with MCCC1 (via the biotin carboxylation domain). Interacts with PCCA and PC. Zn(2+) is required as a cofactor.

The protein resides in the mitochondrion matrix. The enzyme catalyses N(6)-[(R)-lipoyl]-L-lysyl-[protein] + NAD(+) + H2O = 2''-O-lipoyl-ADP-D-ribose + nicotinamide + L-lysyl-[protein]. It catalyses the reaction N(6)-biotinyl-L-lysyl-[protein] + NAD(+) + H2O = 2''-O-biotinyl-ADP-D-ribose + nicotinamide + L-lysyl-[protein]. It carries out the reaction N(6)-acetyl-L-lysyl-[protein] + NAD(+) + H2O = 2''-O-acetyl-ADP-D-ribose + nicotinamide + L-lysyl-[protein]. The catalysed reaction is L-cysteinyl-[protein] + NAD(+) = S-(ADP-D-ribosyl)-L-cysteinyl-[protein] + nicotinamide + H(+). Acts as a NAD-dependent protein lipoamidase, biotinylase, deacetylase and ADP-ribosyl transferase. Catalyzes more efficiently removal of lipoyl- and biotinyl- than acetyl-lysine modifications. Inhibits the pyruvate dehydrogenase complex (PDH) activity via the enzymatic hydrolysis of the lipoamide cofactor from the E2 component, DLAT, in a phosphorylation-independent manner. Catalyzes the transfer of ADP-ribosyl groups onto target proteins, including mitochondrial GLUD1, inhibiting GLUD1 enzyme activity. Acts as a negative regulator of mitochondrial glutamine metabolism by mediating mono ADP-ribosylation of GLUD1: expressed in response to DNA damage and negatively regulates anaplerosis by inhibiting GLUD1, leading to block metabolism of glutamine into tricarboxylic acid cycle and promoting cell cycle arrest. In response to mTORC1 signal, SIRT4 expression is repressed, promoting anaplerosis and cell proliferation. Acts as a tumor suppressor. Also acts as a NAD-dependent protein deacetylase: mediates deacetylation of 'Lys-471' of MLYCD, inhibiting its activity, thereby acting as a regulator of lipid homeostasis. Does not seem to deacetylate PC. Controls fatty acid oxidation by inhibiting PPARA transcriptional activation. Impairs SIRT1-PPARA interaction probably through the regulation of NAD(+) levels. Down-regulates insulin secretion. The chain is NAD-dependent protein lipoamidase sirtuin-4, mitochondrial from Bos taurus (Bovine).